The sequence spans 311 residues: Oxidoreductase NAD-binding domain-containing protein 1 (311 aa).

The N-terminal stretch at 1–17 (MACAAVMIPGLLRCSVG) is a signal peptide. The region spanning 50-186 (HMERTASVLR…GGVGINPLLS (137 aa)) is the FAD-binding FR-type domain. Residue 178–183 (GVGINP) coordinates NAD(+).

The chain is Oxidoreductase NAD-binding domain-containing protein 1 (OXNAD1) from Pongo abelii (Sumatran orangutan).